The following is a 120-amino-acid chain: MVKLTSIAAGVAAIAATASATTTLAQSDERVNLVELGVYVSDIRAHLAQYYSFQVAHPTETYPVEIAEAVFNYGDFTTMLTGIAPDQVTRMITGVPWYSSRLKPAISSALSKDGIYTIAN.

A signal peptide spans 1–20; sequence MVKLTSIAAGVAAIAATASA.

This sequence belongs to the SRP1/TIP1 family. Seripauperin subfamily. In terms of processing, O-glycosylated.

It is found in the secreted. The protein resides in the cell wall. Its function is as follows. Component of the cell wall. This is Seripauperin-24 (PAU24) from Saccharomyces cerevisiae (strain ATCC 204508 / S288c) (Baker's yeast).